Here is a 45-residue protein sequence, read N- to C-terminus: Mu-conotoxin-like Cal 12.1.2g (45 aa).

4 cysteine pairs are disulfide-bonded: Cys-3-Cys-16, Cys-11-Cys-28, Cys-18-Cys-33, and Cys-27-Cys-39. 4-hydroxyproline is present on Pro-23. 2 positions are modified to 6'-bromotryptophan: Trp-37 and Trp-38. Pro-40 is subject to 4-hydroxyproline.

Expressed by the venom duct.

It localises to the secreted. Its function is as follows. Mu-conotoxins block voltage-gated sodium channels. This toxin reversibly blocks voltage-gated sodium channel in cephalopods, with no alteration in the voltage dependence of sodium conductance or on the kinetics of inactivation. This chain is Mu-conotoxin-like Cal 12.1.2g, found in Californiconus californicus (California cone).